Here is a 214-residue protein sequence, read N- to C-terminus: Cytochrome b (214 aa).

Helical transmembrane passes span 31 to 51 (FGSM…FLAI), 75 to 96 (WIMQ…YIHI), 111 to 131 (WLSG…GYVL), and 176 to 196 (FFAL…LHIL). Heme b contacts are provided by His81 and His95. Heme b-binding residues include His180 and His194. His199 is a binding site for a ubiquinone.

The protein belongs to the cytochrome b family. As to quaternary structure, the cytochrome bc1 complex contains 3 respiratory subunits (MT-CYB, CYC1 and UQCRFS1), 2 core proteins (UQCRC1 and UQCRC2) and probably 6 low-molecular weight proteins. The cofactor is heme b.

It is found in the mitochondrion inner membrane. Its function is as follows. Component of the ubiquinol-cytochrome c reductase complex (complex III or cytochrome b-c1 complex) that is part of the mitochondrial respiratory chain. The b-c1 complex mediates electron transfer from ubiquinol to cytochrome c. Contributes to the generation of a proton gradient across the mitochondrial membrane that is then used for ATP synthesis. The chain is Cytochrome b (MT-CYB) from Crotalus atrox (Western diamondback rattlesnake).